The sequence spans 235 residues: tRNA pseudouridine synthase B (235 aa).

The active-site Nucleophile is Asp-45.

The protein belongs to the pseudouridine synthase TruB family. Type 1 subfamily.

The enzyme catalyses uridine(55) in tRNA = pseudouridine(55) in tRNA. In terms of biological role, responsible for synthesis of pseudouridine from uracil-55 in the psi GC loop of transfer RNAs. This chain is tRNA pseudouridine synthase B, found in Chlamydia pneumoniae (Chlamydophila pneumoniae).